Reading from the N-terminus, the 796-residue chain is Protocadherin beta-3 (796 aa).

Positions 1–26 (MEAGGERFLRQRQVLLLFVFLGGSLA) are cleaved as a signal peptide. The Extracellular portion of the chain corresponds to 27–690 (GSESRRYSVA…AQADLLTVYL (664 aa)). 5 consecutive Cadherin domains span residues 35–133 (VAEE…SPVF), 138–242 (MHLK…APEF), 247–347 (YEVA…PPEL), 352–451 (VNSP…APAF), and 456–561 (YTLF…SPFV). N-linked (GlcNAc...) asparagine glycosylation is present at asparagine 169. Residues asparagine 418 and asparagine 436 are each glycosylated (N-linked (GlcNAc...) asparagine). N-linked (GlcNAc...) asparagine glycosylation occurs at asparagine 567. The Cadherin 6 domain maps to 568-671 (GSAPCTELVP…LVDGFSQPYL (104 aa)). The helical transmembrane segment at 691-711 (VVALASVSSLFLFSVLLFVAV) threads the bilayer. The Cytoplasmic segment spans residues 712–796 (RLCRRSRAAS…PSFRKSFEFS (85 aa)).

The protein resides in the cell membrane. Potential calcium-dependent cell-adhesion protein. May be involved in the establishment and maintenance of specific neuronal connections in the brain. The polypeptide is Protocadherin beta-3 (PCDHB3) (Homo sapiens (Human)).